The primary structure comprises 359 residues: Alanine racemase, biosynthetic (359 aa).

Lysine 34 acts as the Proton acceptor; specific for D-alanine in catalysis. An N6-(pyridoxal phosphate)lysine modification is found at lysine 34. Residue arginine 129 coordinates substrate. Catalysis depends on tyrosine 255, which acts as the Proton acceptor; specific for L-alanine. Residue methionine 303 participates in substrate binding.

It belongs to the alanine racemase family. Requires pyridoxal 5'-phosphate as cofactor.

It carries out the reaction L-alanine = D-alanine. Its pathway is amino-acid biosynthesis; D-alanine biosynthesis; D-alanine from L-alanine: step 1/1. It participates in cell wall biogenesis; peptidoglycan biosynthesis. Catalyzes the interconversion of L-alanine and D-alanine. Provides the D-alanine required for cell wall biosynthesis. The sequence is that of Alanine racemase, biosynthetic (alr) from Escherichia coli O157:H7.